We begin with the raw amino-acid sequence, 454 residues long: UDP-N-acetylmuramoylalanine--D-glutamate ligase (454 aa).

Residue 117–123 coordinates ATP; the sequence is GTNGKTT.

The protein belongs to the MurCDEF family.

The protein resides in the cytoplasm. It carries out the reaction UDP-N-acetyl-alpha-D-muramoyl-L-alanine + D-glutamate + ATP = UDP-N-acetyl-alpha-D-muramoyl-L-alanyl-D-glutamate + ADP + phosphate + H(+). The protein operates within cell wall biogenesis; peptidoglycan biosynthesis. Functionally, cell wall formation. Catalyzes the addition of glutamate to the nucleotide precursor UDP-N-acetylmuramoyl-L-alanine (UMA). The sequence is that of UDP-N-acetylmuramoylalanine--D-glutamate ligase from Alkaliphilus oremlandii (strain OhILAs) (Clostridium oremlandii (strain OhILAs)).